The following is a 312-amino-acid chain: Malate dehydrogenase (312 aa).

Residues 12–17 (GAGFTG) and D36 contribute to the NAD(+) site. Positions 87 and 93 each coordinate substrate. Residues N100 and 123–125 (LTN) contribute to the NAD(+) site. N125 contributes to the substrate binding site. At S149 the chain carries Phosphoserine. Residue R156 coordinates substrate. The active-site Proton acceptor is the H180.

It belongs to the LDH/MDH superfamily. MDH type 3 family.

The catalysed reaction is (S)-malate + NAD(+) = oxaloacetate + NADH + H(+). In terms of biological role, catalyzes the reversible oxidation of malate to oxaloacetate. This chain is Malate dehydrogenase, found in Bacillus anthracis (strain A0248).